We begin with the raw amino-acid sequence, 572 residues long: Formate--tetrahydrofolate ligase (572 aa).

ATP is bound at residue Thr-81–Thr-88.

It belongs to the formate--tetrahydrofolate ligase family.

It catalyses the reaction (6S)-5,6,7,8-tetrahydrofolate + formate + ATP = (6R)-10-formyltetrahydrofolate + ADP + phosphate. The protein operates within one-carbon metabolism; tetrahydrofolate interconversion. The sequence is that of Formate--tetrahydrofolate ligase from Granulibacter bethesdensis (strain ATCC BAA-1260 / CGDNIH1).